The chain runs to 517 residues: Aldehyde dehydrogenase X, mitochondrial (517 aa).

Residues 1 to 17 (MLRFLAPRLLSLQGRTA) constitute a mitochondrion transit peptide. Residue Lys-51 is modified to N6-acetyllysine. Lys-52 bears the N6-acetyllysine; alternate mark. Lys-52 carries the post-translational modification N6-succinyllysine; alternate. Lys-81 carries the post-translational modification N6-succinyllysine. 262 to 267 (GSTEVG) is a binding site for NAD(+). Catalysis depends on Glu-285, which acts as the Proton acceptor. Catalysis depends on Cys-319, which acts as the Nucleophile. An N6-acetyllysine; alternate mark is found at Lys-364, Lys-383, Lys-399, Lys-414, and Lys-426. Residues Lys-364, Lys-383, Lys-399, Lys-414, and Lys-426 each carry the N6-succinyllysine; alternate modification. N6-acetyllysine is present on Lys-429.

Belongs to the aldehyde dehydrogenase family. Homotetramer.

Its subcellular location is the mitochondrion matrix. It catalyses the reaction an aldehyde + NAD(+) + H2O = a carboxylate + NADH + 2 H(+). It participates in alcohol metabolism; ethanol degradation; acetate from ethanol: step 2/2. Its function is as follows. ALDHs play a major role in the detoxification of alcohol-derived acetaldehyde. They are involved in the metabolism of corticosteroids, biogenic amines, neurotransmitters, and lipid peroxidation. In Pongo abelii (Sumatran orangutan), this protein is Aldehyde dehydrogenase X, mitochondrial (ALDH1B1).